Reading from the N-terminus, the 233-residue chain is Protein DOUBLE-STRAND BREAK FORMATION (233 aa).

In terms of assembly, interacts with PRD1; this interaction facilitates a binding to PRD3. Specifically expressed in buds.

In terms of biological role, required for meiotic double-strand break (DSB) formation, the initial event for meiotic recombination. In Arabidopsis thaliana (Mouse-ear cress), this protein is Protein DOUBLE-STRAND BREAK FORMATION.